Consider the following 1328-residue polypeptide: DNA-directed RNA polymerase subunit beta (1328 aa).

The protein belongs to the RNA polymerase beta chain family. As to quaternary structure, the RNAP catalytic core consists of 2 alpha, 1 beta, 1 beta' and 1 omega subunit. When a sigma factor is associated with the core the holoenzyme is formed, which can initiate transcription.

It carries out the reaction RNA(n) + a ribonucleoside 5'-triphosphate = RNA(n+1) + diphosphate. DNA-dependent RNA polymerase catalyzes the transcription of DNA into RNA using the four ribonucleoside triphosphates as substrates. The protein is DNA-directed RNA polymerase subunit beta of Karelsulcia muelleri (strain GWSS) (Sulcia muelleri).